We begin with the raw amino-acid sequence, 361 residues long: Innexin inx1 (361 aa).

Topologically, residues 1 to 28 (MYKLLGGLKEYLKWQDIVTDNAIFRLHN) are cytoplasmic. Residues 29–49 (LFTTVLLLTCSLIITATQYVG) form a helical membrane-spanning segment. Topologically, residues 50-109 (NPIHCIVNGLPVRPINTYCWITSTFTMPDAFLRQVGSEVAHPGVANDFGDEDAKKYYTYY) are extracellular. Residues 110 to 130 (QWVCFVLFFQAMLCYTPKWIW) form a helical membrane-spanning segment. The Cytoplasmic segment spans residues 131–181 (DSIEGGLLRTLIMGLNRGLCQDDEKCMKKKALIEYLLRHIKRHNMYALKYW). Residues 182 to 202 (FCETLCLVNIIGQLYLMNHFF) traverse the membrane as a helical segment. Residues 203 to 267 (DGEFFSYGLR…LPLNIVNEKT (65 aa)) are Extracellular-facing. The helical transmembrane segment at 268–288 (YIFLWFWYIILAALLSVLVVY) threads the bilayer. Topologically, residues 289–361 (RAVILAVPSV…KIETPSSNNP (73 aa)) are cytoplasmic.

Belongs to the pannexin family. As to expression, expressed in embryonic neural precursors including the dorsal median neuroblast, glial cells, neuropilar glial ring, developing myoblasts cells and in a circumferential band of epithelial cells at the trochanter/coxa boundary stripe in the developing limb.

It is found in the cell membrane. The protein localises to the cell junction. The protein resides in the gap junction. Functionally, structural components of the gap junctions. This Schistocerca americana (American grasshopper) protein is Innexin inx1 (inx1).